Consider the following 599-residue polypeptide: Elongation factor 4 (599 aa).

The tr-type G domain maps to 2-184 (KNIRNFSIIA…RLVRDIPPPQ (183 aa)). Residues 14-19 (DHGKST) and 131-134 (NKID) contribute to the GTP site.

This sequence belongs to the TRAFAC class translation factor GTPase superfamily. Classic translation factor GTPase family. LepA subfamily.

It localises to the cell inner membrane. It carries out the reaction GTP + H2O = GDP + phosphate + H(+). Its function is as follows. Required for accurate and efficient protein synthesis under certain stress conditions. May act as a fidelity factor of the translation reaction, by catalyzing a one-codon backward translocation of tRNAs on improperly translocated ribosomes. Back-translocation proceeds from a post-translocation (POST) complex to a pre-translocation (PRE) complex, thus giving elongation factor G a second chance to translocate the tRNAs correctly. Binds to ribosomes in a GTP-dependent manner. In Salmonella agona (strain SL483), this protein is Elongation factor 4.